The sequence spans 127 residues: Large ribosomal subunit protein bL20 (127 aa).

Belongs to the bacterial ribosomal protein bL20 family.

Binds directly to 23S ribosomal RNA and is necessary for the in vitro assembly process of the 50S ribosomal subunit. It is not involved in the protein synthesizing functions of that subunit. This Corynebacterium jeikeium (strain K411) protein is Large ribosomal subunit protein bL20.